The sequence spans 520 residues: Ribonuclease Y (520 aa).

A helical transmembrane segment spans residues 1–21 (MEILIIVIAAVVGLALGFAIA). Residues 210–295 (CVSVFNLESD…EVVKKTRKQI (86 aa)) form the KH domain. An HD domain is found at 336–429 (LLQHSREVAK…VQVCDAISGA (94 aa)).

This sequence belongs to the RNase Y family.

The protein localises to the cell membrane. Functionally, endoribonuclease that initiates mRNA decay. This is Ribonuclease Y from Christiangramia forsetii (strain DSM 17595 / CGMCC 1.15422 / KT0803) (Gramella forsetii).